The sequence spans 215 residues: Fanconi anemia core complex-associated protein 24 (215 aa).

Residues Leu-160 to Arg-215 form a ruvA domain 2-like region.

As to quaternary structure, belongs to the multisubunit FA complex composed of FANCA, FANCB, FANCC, FANCE, FANCF, FANCG, FANCL/PHF9, FANCM and FAAP24. Interacts with FANCM.

It localises to the nucleus. In terms of biological role, plays a role in DNA repair through recruitment of the FA core complex to damaged DNA. Regulates FANCD2 monoubiquitination upon DNA damage. Induces chromosomal instability as well as hypersensitivity to DNA cross-linking agents, when repressed. Targets FANCM/FAAP24 complex to the DNA, preferentially to single strand DNA. This chain is Fanconi anemia core complex-associated protein 24, found in Homo sapiens (Human).